The following is a 191-amino-acid chain: LHFPL tetraspan subfamily member 7 protein (191 aa).

The next 4 membrane-spanning stretches (helical) occupy residues 6–26 (MGSL…FSLM), 72–92 (IAAV…VLVL), 112–132 (YAQI…PFNL), and 154–174 (LGWG…LPFI).

This sequence belongs to the TMEM211 family.

The protein resides in the membrane. This chain is LHFPL tetraspan subfamily member 7 protein (lhfpl7), found in Xenopus tropicalis (Western clawed frog).